The sequence spans 149 residues: 3-hydroxyacyl-[acyl-carrier-protein] dehydratase FabZ (149 aa).

Residue H48 is part of the active site.

This sequence belongs to the thioester dehydratase family. FabZ subfamily.

It is found in the cytoplasm. It carries out the reaction a (3R)-hydroxyacyl-[ACP] = a (2E)-enoyl-[ACP] + H2O. Involved in unsaturated fatty acids biosynthesis. Catalyzes the dehydration of short chain beta-hydroxyacyl-ACPs and long chain saturated and unsaturated beta-hydroxyacyl-ACPs. The polypeptide is 3-hydroxyacyl-[acyl-carrier-protein] dehydratase FabZ (Thermomicrobium roseum (strain ATCC 27502 / DSM 5159 / P-2)).